The following is a 607-amino-acid chain: Phosphatidylinositol 4-kinase LSB6 (607 aa).

Positions 73–88 are enriched in polar residues; sequence NVPSESPRPDQTSGSN. Residues 73–93 form a disordered region; it reads NVPSESPRPDQTSGSNPAVGL. Residues 161–522 enclose the PI3K/PI4K catalytic domain; sequence GRELERIQTG…LVRRTRCQVI (362 aa). The G-loop stretch occupies residues 167–173; the sequence is IQTGSSG. The tract at residues 318-356 is disordered; sequence KSSGEDINHKPETTRNLTDETEPSKQINSSPISTESEEN. Over residues 319 to 330 the composition is skewed to basic and acidic residues; sequence SSGEDINHKPET. The segment covering 341–351 has biased composition (polar residues); that stretch reads SKQINSSPIST. The interval 384–392 is catalytic loop; the sequence is RNTDRGLDN. The activation loop stretch occupies residues 411-431; sequence AIDNGLSFPWKHPDEWRLYPY.

Belongs to the PI3/PI4-kinase family. As to quaternary structure, interacts with LAS17. It depends on Mg(2+) as a cofactor. Mn(2+) is required as a cofactor.

The protein localises to the cell membrane. It is found in the vacuole membrane. It carries out the reaction a 1,2-diacyl-sn-glycero-3-phospho-(1D-myo-inositol) + ATP = a 1,2-diacyl-sn-glycero-3-phospho-(1D-myo-inositol 4-phosphate) + ADP + H(+). May play a role in endocytic and/or exocytic pathways. This Saccharomyces cerevisiae (strain ATCC 204508 / S288c) (Baker's yeast) protein is Phosphatidylinositol 4-kinase LSB6 (LSB6).